Here is a 330-residue protein sequence, read N- to C-terminus: Malate dehydrogenase (330 aa).

Residue 13 to 19 (GAAGQIG) participates in NAD(+) binding. Residues Arg-94 and Arg-100 each coordinate substrate. NAD(+) is bound by residues Asn-107, Gln-114, and 131-133 (VGN). 2 residues coordinate substrate: Asn-133 and Arg-164. The Proton acceptor role is filled by His-189.

This sequence belongs to the LDH/MDH superfamily. MDH type 2 family.

It catalyses the reaction (S)-malate + NAD(+) = oxaloacetate + NADH + H(+). Catalyzes the reversible oxidation of malate to oxaloacetate. The polypeptide is Malate dehydrogenase (Deinococcus deserti (strain DSM 17065 / CIP 109153 / LMG 22923 / VCD115)).